The chain runs to 334 residues: Dolichyl-phosphate beta-glucosyltransferase (334 aa).

Residues 1-12 are Lumenal-facing; that stretch reads MRALRFLIENRN. Residues 13 to 33 traverse the membrane as a helical segment; sequence TVFFTLLVALVLSLYLLVYLF. Topologically, residues 34–334 are cytoplasmic; the sequence is SHTPRPPYPE…LGIYRDNKKC (301 aa).

This sequence belongs to the glycosyltransferase 2 family.

The protein resides in the endoplasmic reticulum membrane. The enzyme catalyses a di-trans,poly-cis-dolichyl phosphate + UDP-alpha-D-glucose = a di-trans,poly-cis-dolichyl beta-D-glucosyl phosphate + UDP. It functions in the pathway protein modification; protein glycosylation. Its function is as follows. Endoplasmic reticulum membrane-bound UDP-glucose:dolichyl-phosphate glucosyltransferase involved in protein N-linked glycosylation. This Saccharomyces cerevisiae (strain ATCC 204508 / S288c) (Baker's yeast) protein is Dolichyl-phosphate beta-glucosyltransferase.